The primary structure comprises 597 residues: Aspartate--tRNA(Asp/Asn) ligase (597 aa).

Position 182 (glutamate 182) interacts with L-aspartate. The segment at glutamine 206–lysine 209 is aspartate. Residue arginine 228 coordinates L-aspartate. ATP contacts are provided by residues arginine 228–glutamate 230 and glutamine 237. Histidine 456 contacts L-aspartate. Glutamate 490 contacts ATP. Arginine 497 is a binding site for L-aspartate. An ATP-binding site is contributed by glycine 542–arginine 545.

The protein belongs to the class-II aminoacyl-tRNA synthetase family. Type 1 subfamily. As to quaternary structure, homodimer.

The protein localises to the cytoplasm. The enzyme catalyses tRNA(Asx) + L-aspartate + ATP = L-aspartyl-tRNA(Asx) + AMP + diphosphate. In terms of biological role, aspartyl-tRNA synthetase with relaxed tRNA specificity since it is able to aspartylate not only its cognate tRNA(Asp) but also tRNA(Asn). Reaction proceeds in two steps: L-aspartate is first activated by ATP to form Asp-AMP and then transferred to the acceptor end of tRNA(Asp/Asn). This Desulfatibacillum aliphaticivorans protein is Aspartate--tRNA(Asp/Asn) ligase.